We begin with the raw amino-acid sequence, 393 residues long: Alpha-1,2 mannosyltransferase KTR1 (393 aa).

Over 1-16 (MAKIMIPASKQPVYKK) the chain is Cytoplasmic. The helical; Signal-anchor for type II membrane protein transmembrane segment at 17–34 (LGLLLVAVFTVYVFFHGA) threads the bilayer. The segment at 35-68 (QYARGSAPSPKYSTVLSSGSGYKYSKVELPKYTG) is stem region. At 35 to 393 (QYARGSAPSP…KPAGWQNHIG (359 aa)) the chain is on the lumenal side. Residues 69 to 393 (PREKATFVTL…KPAGWQNHIG (325 aa)) form a catalytic region. Residue Asn120 is glycosylated (N-linked (GlcNAc...) asparagine). Catalysis depends on Glu280, which acts as the Nucleophile.

This sequence belongs to the glycosyltransferase 15 family. It depends on Mn(2+) as a cofactor. N-glycosylated.

It localises to the golgi apparatus membrane. It functions in the pathway protein modification; protein glycosylation. Its function is as follows. Mannosyltransferase that transfers a mannose residue from GDP-mannose to a range of acceptors in vitro, forming an alpha-(1-&gt;2)-D-mannosyl-D-mannose linkage. In Saccharomyces cerevisiae (strain ATCC 204508 / S288c) (Baker's yeast), this protein is Alpha-1,2 mannosyltransferase KTR1 (KTR1).